We begin with the raw amino-acid sequence, 327 residues long: Immunodominant envelope protein p35 (327 aa).

The interval 41–69 is disordered; it reads KNGYDDYRDPPSPKPLPKSKQEPNADDKV. Residues 59–69 are compositionally biased toward basic and acidic residues; the sequence is SKQEPNADDKV. Residues 291 to 311 form a helical membrane-spanning segment; the sequence is ITMMFLIAIVIIIGLAIFDIN.

The protein belongs to the poxviruses protein p35 family.

Its subcellular location is the virion membrane. Functionally, envelope protein that binds to the cell surface to provide virion attachment to target cell. This chain is Immunodominant envelope protein p35, found in Fowlpox virus (strain NVSL) (FPV).